Here is a 428-residue protein sequence, read N- to C-terminus: Spliceosome RNA helicase DDX39B (428 aa).

Over residues 1-19 (MAENDVDNELLDYEEDEVE) the composition is skewed to acidic residues. The tract at residues 1-32 (MAENDVDNELLDYEEDEVETAAGGDGSEAPAK) is disordered. Alanine 2 carries the post-translational modification N-acetylalanine. Lysine 36 is modified (N6-acetyllysine; alternate). Residue lysine 36 forms a Glycyl lysine isopeptide (Lys-Gly) (interchain with G-Cter in SUMO2); alternate linkage. A phosphoserine mark is found at serine 38 and serine 41. A Q motif motif is present at residues 45 to 73 (SGFRDFLLKPELLRAIVDCGFEHPSEVQH). The Helicase ATP-binding domain occupies 76–249 (IPQAILGMDV…RKFMQDPMEI (174 aa)). Residue 89–96 (AKSGMGKT) coordinates ATP. Threonine 172 carries the post-translational modification Phosphothreonine. The DECD box signature appears at 196–199 (DECD). Residues 261–422 (GLQQYYVKLK…ELPDEIDISS (162 aa)) enclose the Helicase C-terminal domain.

The protein belongs to the DEAD box helicase family. DECD subfamily. As to quaternary structure, homodimer, and heterodimer with DDX39A. DDX39B interacts with the THO subcomplex to form the THO-DDX39B complex which multimerizes into a 28-subunit tetrameric assembly. Component of the transcription/export (TREX) complex at least composed of ALYREF/THOC4, DDX39B, SARNP/CIP29, CHTOP and the THO subcomplex; in the complex interacts with THOC2. THOC1-THOC2-THOC3-DDX39B subcomplex is sufficient for the interaction with export factor NXF1-NXT1. TREX seems to have a dynamic structure involving ATP-dependent remodeling. Within the TREX complex bridges ALYREF/THOC4 and the THO subcomplex, and, in a ATP-dependent manner, ALYREF/THOC4 and SARNP/CIP29. Component of the spliceosome. Interacts directly with U2AF2. Interacts with RBM8A, RNPS1 and SRRM1, FYTTD1/UIF, THOC1, MX1 and POLDIP3. Interacts with LUZP4. Interacts with SARNP/CIP29 (via the C-terminal domain); the interaction is direct and facilitates RNA binding of DDX39B.

The protein resides in the nucleus. Its subcellular location is the nucleus speckle. It is found in the cytoplasm. The enzyme catalyses ATP + H2O = ADP + phosphate + H(+). Its function is as follows. Involved in nuclear export of spliced and unspliced mRNA. Component of the TREX complex which is thought to couple mRNA transcription, processing and nuclear export, and specifically associates with spliced mRNA and not with unspliced pre-mRNA. The TREX complex is recruited to spliced mRNAs by a transcription-independent mechanism, binds to mRNA upstream of the exon-junction complex (EJC) and is recruited in a splicing- and cap-dependent manner to a region near the 5' end of the mRNA where it functions in mRNA export to the cytoplasm via the TAP/NXF1 pathway. The THOC1-THOC2-THOC3 core complex alone is sufficient to promote ATPase activity of DDX39B; in the complex THOC2 is the only component that directly interacts with DDX39B. Associates with SARNP/CIP29, which facilitates RNA binding of DDX39B and likely plays a role in mRNA export. May undergo several rounds of ATP hydrolysis during assembly of TREX to drive subsequent loading of components such as ALYREF/THOC4 and CHTOP onto mRNA. Also associates with pre-mRNA independent of ALYREF/THOC4. Involved in the nuclear export of intronless mRNA; the ATP-bound form is proposed to recruit export adapter ALYREF/THOC4 to intronless mRNA; its ATPase activity is cooperatively stimulated by RNA and ALYREF/THOC4 and ATP hydrolysis is thought to trigger the dissociation from RNA to allow the association of ALYREF/THOC4 and the NXF1-NXT1 heterodimer. Involved in transcription elongation and genome stability. In terms of biological role, splice factor that is required for the first ATP-dependent step in spliceosome assembly and for the interaction of U2 snRNP with the branchpoint. Has both RNA-stimulated ATP binding/hydrolysis activity and ATP-dependent RNA unwinding activity. Even with the stimulation of RNA, the ATPase activity is weak. Can only hydrolyze ATP but not other NTPs. The RNA stimulation of ATPase activity does not have a strong preference for the sequence and length of the RNA. However, ssRNA stimulates the ATPase activity much more strongly than dsRNA. Can unwind 5' or 3' overhangs or blunt end RNA duplexes in vitro. The ATPase and helicase activities are not influenced by U2AF2; the effect of ALYREF/THOC4 is reported conflictingly. In Canis lupus familiaris (Dog), this protein is Spliceosome RNA helicase DDX39B (DDX39B).